A 206-amino-acid chain; its full sequence is Peptidyl-tRNA hydrolase (206 aa).

Tyr14 is a binding site for tRNA. Catalysis depends on His19, which acts as the Proton acceptor. The tRNA site is built by Phe64 and Asn66. Residues 185–206 (VNGEAPKKSKDQAKEPANEQPR) form a disordered region. Basic and acidic residues predominate over residues 189–206 (APKKSKDQAKEPANEQPR).

The protein belongs to the PTH family. As to quaternary structure, monomer.

The protein resides in the cytoplasm. It catalyses the reaction an N-acyl-L-alpha-aminoacyl-tRNA + H2O = an N-acyl-L-amino acid + a tRNA + H(+). In terms of biological role, hydrolyzes ribosome-free peptidyl-tRNAs (with 1 or more amino acids incorporated), which drop off the ribosome during protein synthesis, or as a result of ribosome stalling. Its function is as follows. Catalyzes the release of premature peptidyl moieties from peptidyl-tRNA molecules trapped in stalled 50S ribosomal subunits, and thus maintains levels of free tRNAs and 50S ribosomes. The polypeptide is Peptidyl-tRNA hydrolase (Herpetosiphon aurantiacus (strain ATCC 23779 / DSM 785 / 114-95)).